The sequence spans 671 residues: Acetyl-coenzyme A synthetase (671 aa).

The disordered stretch occupies residues 1–21 (MPTASASESSSNQPESSNASG). Residues 221-224 (RRGK), T339, and N363 each bind CoA. Residues 415-417 (GEG), 439-444 (DTWWQT), D528, and R543 each bind ATP. S551 contributes to the CoA binding site. ATP is bound at residue R554. V565, H567, and V570 together coordinate Mg(2+). R611 contacts CoA. Position 636 is an N6-acetyllysine (K636).

The protein belongs to the ATP-dependent AMP-binding enzyme family. Requires Mg(2+) as cofactor. Acetylated. Deacetylation by the SIR2-homolog deacetylase activates the enzyme.

The catalysed reaction is acetate + ATP + CoA = acetyl-CoA + AMP + diphosphate. In terms of biological role, catalyzes the conversion of acetate into acetyl-CoA (AcCoA), an essential intermediate at the junction of anabolic and catabolic pathways. AcsA undergoes a two-step reaction. In the first half reaction, AcsA combines acetate with ATP to form acetyl-adenylate (AcAMP) intermediate. In the second half reaction, it can then transfer the acetyl group from AcAMP to the sulfhydryl group of CoA, forming the product AcCoA. The sequence is that of Acetyl-coenzyme A synthetase from Rhodopirellula baltica (strain DSM 10527 / NCIMB 13988 / SH1).